A 312-amino-acid chain; its full sequence is Olfactory receptor 2T10 (312 aa).

At 1 to 25 (MRLANQTLGGDFFLLGIFSQISHPG) the chain is on the extracellular side. A glycan (N-linked (GlcNAc...) asparagine) is linked at Asn-5. Residues 26 to 49 (RLCLLIFSIFLMAVSWNITLILLI) form a helical membrane-spanning segment. Over 50-57 (HIDSSLHT) the chain is Cytoplasmic. Residues 58-79 (PMYFFINQLSLIDLTYISVTVP) form a helical membrane-spanning segment. Residues 80–100 (KMLVNQLAKDKTISVLGCGTQ) are Extracellular-facing. An intrachain disulfide couples Cys-97 to Cys-189. Residues 101–120 (MYFYLQLGGAECCLLAAMAY) form a helical membrane-spanning segment. Over 121 to 139 (DRYVAICHPLRYSVLMSHR) the chain is Cytoplasmic. A helical membrane pass occupies residues 140–158 (VCLLLASGCWFVGSVDGFM). At 159 to 195 (LTPIAMSFPFCRSHEIQHFFCEVPAVLKLSCSDTSLY) the chain is on the extracellular side. Residues 196 to 219 (KIFMYLCCVIMLLIPVTVISVSYY) form a helical membrane-spanning segment. At 220 to 236 (YIILTIHKMNSVEGRKK) the chain is on the cytoplasmic side. Residues 237-259 (AFTTCSSHITVVSLFYGAAIYNY) form a helical membrane-spanning segment. The Extracellular segment spans residues 260 to 272 (MLPSSYQTPEKDM). The helical transmembrane segment at 273–292 (MSSFFYTILTPVLNPIIYSF) threads the bilayer. The Cytoplasmic segment spans residues 293 to 312 (RNKDVTRALKKMLSVQKPPY).

The protein belongs to the G-protein coupled receptor 1 family.

It localises to the cell membrane. Odorant receptor. This Homo sapiens (Human) protein is Olfactory receptor 2T10 (OR2T10).